We begin with the raw amino-acid sequence, 246 residues long: 4-hydroxy-tetrahydrodipicolinate reductase (246 aa).

7–12 serves as a coordination point for NAD(+); the sequence is GCSGRM. Position 34 (Arg-34) interacts with NADP(+). Residues 76 to 78 and 102 to 105 each bind NAD(+); these read ATT and CPNT. The Proton donor/acceptor role is filled by His-135. His-136 contributes to the (S)-2,3,4,5-tetrahydrodipicolinate binding site. Catalysis depends on Lys-139, which acts as the Proton donor. A (S)-2,3,4,5-tetrahydrodipicolinate-binding site is contributed by 145 to 146; that stretch reads GT.

The protein belongs to the DapB family.

Its subcellular location is the cytoplasm. It carries out the reaction (S)-2,3,4,5-tetrahydrodipicolinate + NAD(+) + H2O = (2S,4S)-4-hydroxy-2,3,4,5-tetrahydrodipicolinate + NADH + H(+). The catalysed reaction is (S)-2,3,4,5-tetrahydrodipicolinate + NADP(+) + H2O = (2S,4S)-4-hydroxy-2,3,4,5-tetrahydrodipicolinate + NADPH + H(+). The protein operates within amino-acid biosynthesis; L-lysine biosynthesis via DAP pathway; (S)-tetrahydrodipicolinate from L-aspartate: step 4/4. Its function is as follows. Catalyzes the conversion of 4-hydroxy-tetrahydrodipicolinate (HTPA) to tetrahydrodipicolinate. This chain is 4-hydroxy-tetrahydrodipicolinate reductase, found in Chlamydia abortus (strain DSM 27085 / S26/3) (Chlamydophila abortus).